We begin with the raw amino-acid sequence, 216 residues long: Thymidylate kinase (216 aa).

10 to 17 (GIDGCGKT) is an ATP binding site.

Belongs to the thymidylate kinase family.

It carries out the reaction dTMP + ATP = dTDP + ADP. Phosphorylation of dTMP to form dTDP in both de novo and salvage pathways of dTTP synthesis. This Prochlorococcus marinus (strain MIT 9313) protein is Thymidylate kinase.